The sequence spans 267 residues: Acyl-[acyl-carrier-protein]--UDP-N-acetylglucosamine O-acyltransferase (267 aa).

It belongs to the transferase hexapeptide repeat family. LpxA subfamily. In terms of assembly, homotrimer.

It is found in the cytoplasm. It carries out the reaction a (3R)-hydroxyacyl-[ACP] + UDP-N-acetyl-alpha-D-glucosamine = a UDP-3-O-[(3R)-3-hydroxyacyl]-N-acetyl-alpha-D-glucosamine + holo-[ACP]. It functions in the pathway glycolipid biosynthesis; lipid IV(A) biosynthesis; lipid IV(A) from (3R)-3-hydroxytetradecanoyl-[acyl-carrier-protein] and UDP-N-acetyl-alpha-D-glucosamine: step 1/6. In terms of biological role, involved in the biosynthesis of lipid A, a phosphorylated glycolipid that anchors the lipopolysaccharide to the outer membrane of the cell. This is Acyl-[acyl-carrier-protein]--UDP-N-acetylglucosamine O-acyltransferase from Cupriavidus pinatubonensis (strain JMP 134 / LMG 1197) (Cupriavidus necator (strain JMP 134)).